The following is a 208-amino-acid chain: uncharacterized protein (208 aa).

The tract at residues 126–151 is disordered; sequence VGSGSGSDSSSGSTSSPNTVNNYNSD. A compositionally biased stretch (low complexity) spans 131–141; that stretch reads GSDSSSGSTSS.

This is an uncharacterized protein from Dictyostelium discoideum (Social amoeba).